A 599-amino-acid chain; its full sequence is Aspartate--tRNA(Asp/Asn) ligase (599 aa).

Glutamate 172 contacts L-aspartate. The tract at residues 196-199 (QLFK) is aspartate. Arginine 218 is an L-aspartate binding site. Residues 218-220 (RDE) and glutamine 227 contribute to the ATP site. Residue histidine 455 coordinates L-aspartate. Glutamate 489 is a binding site for ATP. Position 496 (arginine 496) interacts with L-aspartate. An ATP-binding site is contributed by 541–544 (GLDR).

This sequence belongs to the class-II aminoacyl-tRNA synthetase family. Type 1 subfamily. Homodimer.

The protein localises to the cytoplasm. The catalysed reaction is tRNA(Asx) + L-aspartate + ATP = L-aspartyl-tRNA(Asx) + AMP + diphosphate. Functionally, aspartyl-tRNA synthetase with relaxed tRNA specificity since it is able to aspartylate not only its cognate tRNA(Asp) but also tRNA(Asn). Reaction proceeds in two steps: L-aspartate is first activated by ATP to form Asp-AMP and then transferred to the acceptor end of tRNA(Asp/Asn). The chain is Aspartate--tRNA(Asp/Asn) ligase from Herminiimonas arsenicoxydans.